Here is a 259-residue protein sequence, read N- to C-terminus: Ras-related protein Rab-34 (259 aa).

M1 bears the N-acetylmethionine mark. GTP contacts are provided by S62, V63, G64, K65, T66, D78, Y81, and T84. T66 lines the Mg(2+) pocket. Residues 71 to 89 (RFCKDTFDKNYKATIGVDF) carry the Switch 1 motif. Mg(2+)-binding residues include T84 and D107. The short motif at 108-127 (TAGQERFKCIASTYYRGAQA) is the Switch 2 element. GTP contacts are provided by G110, K167, D169, and S198. S241 and S244 each carry phosphoserine. Residues C257 and C258 are each lipidated (S-geranylgeranyl cysteine).

Belongs to the small GTPase superfamily. Rab family. As to quaternary structure, interacts with RILP. The GTP-bound form interacts with REP15. The cofactor is Mg(2+).

It localises to the cytoplasm. It is found in the golgi apparatus. The protein localises to the cytoplasmic vesicle. Its subcellular location is the phagosome. The protein resides in the phagosome membrane. It localises to the cell projection. It is found in the cilium. The protein localises to the cytoskeleton. Its subcellular location is the microtubule organizing center. The protein resides in the centrosome. It localises to the centriole. It catalyses the reaction GTP + H2O = GDP + phosphate + H(+). Regulated by guanine nucleotide exchange factors (GEFs) which promote the exchange of bound GDP for free GTP. Regulated by GTPase activating proteins (GAPs) which increase the GTP hydrolysis activity. Inhibited by GDP dissociation inhibitors (GDIs). Functionally, the small GTPases Rab are key regulators of intracellular membrane trafficking, from the formation of transport vesicles to their fusion with membranes. Rabs cycle between an inactive GDP-bound form and an active GTP-bound form that is able to recruit to membranes different sets of downstream effectors directly responsible for vesicle formation, movement, tethering and fusion. RAB34 transports protein involved in the redistribution of lysosomes to the peri-Golgi region. Plays a role in the maturation of phagosomes that engulf pathogens, such as S.aureus and M.tuberculosis. Plays a role in the fusion of phagosomes with lysosomes. Required for the early steps of intracellular ciliogenesis, the cilium assembly pathway initiated by trafficking and docking of ciliary vesicles to the centrioles in the cytoplasm, followed by axoneme formation in the cytoplasm. After axoneme elongation, the centrioles migrate close to the cell surface so that ciliary vesicles can fuse with the plasma membrane to expose cilia to the extracellular space. It seems dispensable for ciliogenesis via the extracellular pathway where cilium assembly begins after migration and docking of the centriole to the plasma membrane. Also acts as a positive regulator of hedgehog signaling and regulates ciliary function. The protein is Ras-related protein Rab-34 (RAB34) of Sus scrofa (Pig).